Consider the following 236-residue polypeptide: Uridylate kinase (236 aa).

ATP is bound at residue 10-13; the sequence is KLSG. UMP is bound at residue G52. ATP-binding residues include G53 and R57. Residues D72 and 133-140 each bind UMP; that span reads TGNPFFTT. 3 residues coordinate ATP: T160, Y166, and D169.

It belongs to the UMP kinase family. Homohexamer.

It localises to the cytoplasm. The enzyme catalyses UMP + ATP = UDP + ADP. It participates in pyrimidine metabolism; CTP biosynthesis via de novo pathway; UDP from UMP (UMPK route): step 1/1. With respect to regulation, inhibited by UTP. Its function is as follows. Catalyzes the reversible phosphorylation of UMP to UDP. The sequence is that of Uridylate kinase from Phocaeicola vulgatus (strain ATCC 8482 / DSM 1447 / JCM 5826 / CCUG 4940 / NBRC 14291 / NCTC 11154) (Bacteroides vulgatus).